We begin with the raw amino-acid sequence, 388 residues long: S-adenosylmethionine synthase (388 aa).

ATP is bound at residue histidine 16. Residue aspartate 18 participates in Mg(2+) binding. Glutamate 44 contributes to the K(+) binding site. L-methionine contacts are provided by glutamate 57 and glutamine 100. The interval 100–110 (QSPEIAQGVDR) is flexible loop. Residues 165–167 (DAK), 231–232 (KF), aspartate 240, 246–247 (RK), alanine 263, and lysine 267 each bind ATP. Aspartate 240 is an L-methionine binding site. Lysine 271 is an L-methionine binding site.

The protein belongs to the AdoMet synthase family. As to quaternary structure, homotetramer; dimer of dimers. The cofactor is Mg(2+). Requires K(+) as cofactor.

Its subcellular location is the cytoplasm. The catalysed reaction is L-methionine + ATP + H2O = S-adenosyl-L-methionine + phosphate + diphosphate. The protein operates within amino-acid biosynthesis; S-adenosyl-L-methionine biosynthesis; S-adenosyl-L-methionine from L-methionine: step 1/1. Its function is as follows. Catalyzes the formation of S-adenosylmethionine (AdoMet) from methionine and ATP. The overall synthetic reaction is composed of two sequential steps, AdoMet formation and the subsequent tripolyphosphate hydrolysis which occurs prior to release of AdoMet from the enzyme. The chain is S-adenosylmethionine synthase from Psychrobacter sp. (strain PRwf-1).